The sequence spans 574 residues: Tyrosinase (574 aa).

His-67, His-95, His-104, His-275, His-279, and His-304 together coordinate Cu cation. The segment at residues 93-95 is a cross-link (2'-(S-cysteinyl)-histidine (Cys-His)); the sequence is CTH.

This sequence belongs to the tyrosinase family. Cu(2+) serves as cofactor.

It catalyses the reaction 2 L-dopa + O2 = 2 L-dopaquinone + 2 H2O. The catalysed reaction is L-tyrosine + O2 = L-dopaquinone + H2O. Its function is as follows. This is a copper-containing oxidase that functions in the formation of pigments such as melanins and other polyphenolic compounds. The polypeptide is Tyrosinase (TYR) (Podospora anserina (Pleurage anserina)).